A 156-amino-acid polypeptide reads, in one-letter code: Ribonuclease pancreatic (156 aa).

The signal sequence occupies residues 1–28 (MALEKSLVLLPLLVLALLVLGWIQPSLG). The substrate site is built by lysine 35 and arginine 38. Histidine 40 functions as the Proton acceptor in the catalytic mechanism. 4 cysteine pairs are disulfide-bonded: cysteine 54-cysteine 112, cysteine 68-cysteine 123, cysteine 86-cysteine 138, and cysteine 93-cysteine 100. An N-linked (GlcNAc...) asparagine glycan is attached at asparagine 62. 69 to 73 (KPVNT) is a binding site for substrate. Asparagine 90 is a glycosylation site (N-linked (GlcNAc...) asparagine). Lysine 94 serves as a coordination point for substrate. A glycan (N-linked (GlcNAc...) asparagine) is linked at asparagine 104. Residue arginine 113 participates in substrate binding. The active-site Proton donor is the histidine 147.

It belongs to the pancreatic ribonuclease family. As to quaternary structure, monomer. Interacts with and forms tight 1:1 complexes with RNH1. Dimerization of two such complexes may occur. Interaction with RNH1 inhibits this protein.

The protein localises to the secreted. The catalysed reaction is an [RNA] containing cytidine + H2O = an [RNA]-3'-cytidine-3'-phosphate + a 5'-hydroxy-ribonucleotide-3'-[RNA].. It catalyses the reaction an [RNA] containing uridine + H2O = an [RNA]-3'-uridine-3'-phosphate + a 5'-hydroxy-ribonucleotide-3'-[RNA].. In terms of biological role, endonuclease that catalyzes the cleavage of RNA on the 3' side of pyrimidine nucleotides. Acts on single-stranded and double-stranded RNA. The protein is Ribonuclease pancreatic (RNASE1) of Lemur catta (Ring-tailed lemur).